We begin with the raw amino-acid sequence, 1009 residues long: MAAIKALQEWCRQQCEGYRDVSITNMTTSFRDGLAFCAILHRHRPDLINFSALRKENIYENNKLAFQVAEEQLGIPALLDAEDMVALKVPDRLSILTYVSQYYNYFHGRSPIGGMAGIKRPSSDSTEELSGKKGLSQPAKLPSPAQTQRSPLSPARTNPVVQRNEGGSQRPSPKAAPGTAGSSVSSICGVCGKHVHLVQRHLADGRLYHRSCFRCKQCSSTLHSGAYRATGEPGVFVCTHHSSEVTSVSPKSSNLASRKPGGVTADTRPFGVSWTVQEANGEGTPLRVRTAAWEHAGGNTTAKGFVQTELKPPSTSQVHVGSSAGPKLPTITVTTTSVTSKALTHVTNSSPIGWSSPAQSSPANFNSRPVVSPSARNTHLPGSQGQTASKGVKTQLNLNSESSNTAVTPAWTSSASKTQQAREKFFQTPPSAPAPASAPAPAPTSKVPTVVTVPTSKVPNVVTAPTSKVPTVVTVPTSKVPTVVSAPTSKVPTVVSAPTSKVPTVVNSTNSRVTTVVNAPTSKVPTVVSATNGRVPTVVTAHTGRVPAVMNTSASKVSPVVDAPAQESSREQALSVLRKALPALTGSGTQAPNRSFPATSSVLVTLPKNEVPQKVPSDKLSALTTQTPNFTIKLEPSAPVNVGNTAVFLQAGKKSPSISPRVGKTSVGSRPQAEVAGVKGPGPISQEGQEEGPEGWRARLKPVDKKTPAGRSLEQKEPVLAEPRIGDTSRKASSSSDSSVHITLTSIQHKRKPCPAGSGPSPAALSPSPSHRKKLAVPPSLDVSADWLQPEPKKQEDGTRSCKEEKSPTRWSRERSAVLDSGLAPPGEAVTSPVRLHPDYIPQEELQRQLQDIESQLDALELRGVELEKRLRAAEGDASEDSLMVDWFRLIHEKQLLLRLESELMYKSKDQRLEEQQLDLQGELRRLMDKPEGLKSPQDRQREQELLSQYVNTVNDRSDIVDFLDEDRLREQEEDQMLENMIQNLGLQRKKSKSFLSKIWSSKSKSGQA.

Positions 1 to 107 (MAAIKALQEW…YVSQYYNYFH (107 aa)) constitute a Calponin-homology (CH) domain. The forms an intramolecular interaction with the C-terminal coiled coil domain keeping the protein in a closed conformation stretch occupies residues 1–260 (MAAIKALQEW…KSSNLASRKP (260 aa)). A phosphoserine mark is found at S110, S143, and S153. Disordered regions lie at residues 114-180 (GMAG…PGTA), 247-268 (SVSP…ADTR), 348-447 (NSSP…TSKV), and 655-834 (SPSI…TSPV). Polar residues predominate over residues 144 to 171 (PAQTQRSPLSPARTNPVVQRNEGGSQRP). The LIM zinc-binding domain maps to 186 to 248 (SICGVCGKHV…THHSSEVTSV (63 aa)). S249 bears the Phosphoserine mark. Positions 261 to 393 (GGVTADTRPF…QGQTASKGVK (133 aa)) are necessary and sufficient for interaction with actinins. Residues 261-805 (GGVTADTRPF…EDGTRSCKEE (545 aa)) are mediates targeting to the cell plasma membrane. Positions 348–419 (NSSPIGWSSP…AWTSSASKTQ (72 aa)) are enriched in polar residues. Pro residues predominate over residues 430 to 442 (PSAPAPASAPAPA). Over residues 694–730 (EGWRARLKPVDKKTPAGRSLEQKEPVLAEPRIGDTSR) the composition is skewed to basic and acidic residues. Low complexity-rich tracts occupy residues 731 to 746 (KASS…TLTS) and 755 to 769 (PAGS…SPSP). 2 positions are modified to phosphoserine: S766 and S768. Positions 791 to 817 (EPKKQEDGTRSCKEEKSPTRWSRERSA) are enriched in basic and acidic residues. The interval 806–913 (KSPTRWSRER…LMYKSKDQRL (108 aa)) is forms an intramolecular interaction with the N-terminal Calponin-homology and LIM zinc-binding domains-containing region keeping the protein in a closed conformation. A Phosphoserine modification is found at S832. A bMERB domain is found at 833 to 980 (PVRLHPDYIP…EQEEDQMLEN (148 aa)). Residues 841-880 (IPQEELQRQLQDIESQLDALELRGVELEKRLRAAEGDASE) adopt a coiled-coil conformation. The tract at residues 913–1009 (LEEQQLDLQG…WSSKSKSGQA (97 aa)) is mediates interaction with RAB13 and is required for transition from the closed to the open conformation.

In terms of assembly, interacts with RAB13 (GTP-bound form); competes with RAB8A and is involved in tight junctions assembly. Interacts with RAB8A; competes with RAB13 and is involved in E-cadherin endocytic recycling. Interacts with RAB8B. Interacts (preferentially in opened conformation) with ACTN1 and ACTN4; stimulated by RAB13 activation. Interacts (via calponin-homology (CH) domain) with the filamins FLNA, FLNB and FLNC (via actin-binding domain). In terms of tissue distribution, detected in brain, lung, liver and kidney (at protein level).

Its subcellular location is the cell membrane. The protein localises to the cell junction. It is found in the tight junction. The protein resides in the recycling endosome. It localises to the cell projection. Its subcellular location is the neuron projection. The protein localises to the cytoplasm. It is found in the cytoskeleton. Its function is as follows. Effector of small Rab GTPases RAB8A and RAB13 which is involved in junctional complexes assembly through the regulation of cell adhesion molecules transport to the plasma membrane and actin cytoskeleton reorganization. Regulates the endocytic recycling of occludins, claudins and E-cadherin to the plasma membrane and may thereby regulate the establishment of tight junctions and adherens junctions. In parallel, may regulate actin cytoskeleton reorganization directly through interaction with F-actin or indirectly through actinins and filamins. Undergoes liquid-liquid phase separation to form tubular recycling endosomes. Plays 2 sequential roles in the biogenesis of tubular recycling endosomes: first organizes phase separation and then the closed form formed by interaction with RAB8A promotes endosomal tubulation. This Mus musculus (Mouse) protein is MICAL-like protein 2 (Micall2).